Consider the following 497-residue polypeptide: Zinc metalloproteinase nas-28 (497 aa).

The N-terminal stretch at 1–14 is a signal peptide; sequence MFFPVVFFIPFVLG. Positions 15-120 are excised as a propeptide; it reads APTQKALEKI…IENGNYRSKR (106 aa). N76 carries an N-linked (GlcNAc...) asparagine glycan. The 199-residue stretch at 121-319 folds into the Peptidase M12A domain; sequence QAIVDTTNFW…IGVNKLYNCT (199 aa). Cystine bridges form between C164–C318, C185–C206, C328–C339, C331–C342, C344–C353, C364–C398, and C427–C447. Residue H214 coordinates Zn(2+). Residue E215 is part of the active site. The Zn(2+) site is built by H218 and H224. A glycan (N-linked (GlcNAc...) asparagine) is linked at N317. The region spanning 324–354 is the EGF-like domain; that stretch reads IQMKCSNCGITDSRNCNQCKCPRYFTGASCD. Residues 364 to 483 enclose the CUB domain; that stretch reads CNGAVLQATS…LTFSIQYRAV (120 aa). Residue N394 is glycosylated (N-linked (GlcNAc...) asparagine).

Zn(2+) is required as a cofactor.

It is found in the secreted. Functionally, metalloprotease. In Caenorhabditis elegans, this protein is Zinc metalloproteinase nas-28 (nas-28).